The chain runs to 942 residues: Lambda-carrageenase (942 aa).

The N-terminal stretch at methionine 1 to alanine 25 is a signal peptide.

As to quaternary structure, monomer.

Its subcellular location is the secreted. The catalysed reaction is Endohydrolysis of (1-&gt;4)-beta-linkages in the backbone of lambda-carrageenan, resulting in the tetrasaccharide alpha-D-Galp2,6S2-(1-&gt;3)-beta-D-Galp2S-(1-&gt;4)-alpha-D-Galp2,6S2-(1-&gt;3)-D-Galp2S.. In terms of biological role, hydrolyzes lambda-carrageenan with inversion of anomeric configuration. Does not hydrolyze iota- and kappa-carrageenans, agarose or porphyran. This chain is Lambda-carrageenase, found in Pseudoalteromonas sp.